The chain runs to 101 residues: uncharacterized protein (101 aa).

A helical membrane pass occupies residues 13 to 33 (FISIMCLFSIPLCFSLSIFFF).

Its subcellular location is the membrane. This is an uncharacterized protein from Schizosaccharomyces pombe (strain 972 / ATCC 24843) (Fission yeast).